A 143-amino-acid polypeptide reads, in one-letter code: Large ribosomal subunit protein uL13 (143 aa).

This sequence belongs to the universal ribosomal protein uL13 family. In terms of assembly, part of the 50S ribosomal subunit.

Functionally, this protein is one of the early assembly proteins of the 50S ribosomal subunit, although it is not seen to bind rRNA by itself. It is important during the early stages of 50S assembly. The protein is Large ribosomal subunit protein uL13 of Dichelobacter nodosus (strain VCS1703A).